The sequence spans 338 residues: Biotin synthase (338 aa).

Residues 50 to 277 (QAVQLSTLMS…KSYVRLSAGR (228 aa)) enclose the Radical SAM core domain. Residues Cys65, Cys69, and Cys72 each coordinate [4Fe-4S] cluster. Residues Cys109, Cys140, Cys200, and Arg272 each contribute to the [2Fe-2S] cluster site.

The protein belongs to the radical SAM superfamily. Biotin synthase family. As to quaternary structure, homodimer. It depends on [4Fe-4S] cluster as a cofactor. Requires [2Fe-2S] cluster as cofactor.

The catalysed reaction is (4R,5S)-dethiobiotin + (sulfur carrier)-SH + 2 reduced [2Fe-2S]-[ferredoxin] + 2 S-adenosyl-L-methionine = (sulfur carrier)-H + biotin + 2 5'-deoxyadenosine + 2 L-methionine + 2 oxidized [2Fe-2S]-[ferredoxin]. The protein operates within cofactor biosynthesis; biotin biosynthesis; biotin from 7,8-diaminononanoate: step 2/2. In terms of biological role, catalyzes the conversion of dethiobiotin (DTB) to biotin by the insertion of a sulfur atom into dethiobiotin via a radical-based mechanism. This Actinobacillus succinogenes (strain ATCC 55618 / DSM 22257 / CCUG 43843 / 130Z) protein is Biotin synthase.